We begin with the raw amino-acid sequence, 924 residues long: DNA polymerase (924 aa).

The 3'-5' exonuclease domain maps to Tyr-235 to Ser-386.

This sequence belongs to the DNA polymerase type-A family.

The catalysed reaction is DNA(n) + a 2'-deoxyribonucleoside 5'-triphosphate = DNA(n+1) + diphosphate. In terms of biological role, replicates viral genomic DNA. This polymerase possesses two enzymatic activities: DNA synthesis (polymerase) and an exonucleolytic activity that degrades single-stranded DNA in the 3'-5' direction. The polypeptide is DNA polymerase (31) (Bacillus phage SP01 (Bacteriophage SP01)).